The following is a 355-amino-acid chain: Cytoplasmic tRNA 2-thiolation protein 1 (355 aa).

The disordered stretch occupies residues 320-341 (GIGRPRGVNGDHNKETKKPGSV). A compositionally biased stretch (basic and acidic residues) spans 328 to 337 (NGDHNKETKK).

It belongs to the TtcA family. CTU1/NCS6/ATPBD3 subfamily.

It localises to the cytoplasm. Its pathway is tRNA modification; 5-methoxycarbonylmethyl-2-thiouridine-tRNA biosynthesis. In terms of biological role, plays a central role in 2-thiolation of mcm(5)S(2)U at tRNA wobble positions of tRNA(Lys), tRNA(Glu) and tRNA(Gln). Directly binds tRNAs and probably acts by catalyzing adenylation of tRNAs, an intermediate required for 2-thiolation. It is unclear whether it acts as a sulfurtransferase that transfers sulfur from thiocarboxylated URM1 onto the uridine of tRNAs at wobble position. The polypeptide is Cytoplasmic tRNA 2-thiolation protein 1 (Arabidopsis thaliana (Mouse-ear cress)).